The primary structure comprises 247 residues: MQAQQSTVDPSEIAKFEAMAAEWWDPNGKFKPLHMLNPCRLDYITSQIAGEFDRDLKTDAPFAGLRILDIGCGGGLLSEPMARLGAEVVGADAAEGNLPVARIHAEQSGLEIDYRHTTAEAMAEAGEQFDVVLNMEVVEHVADPLSYLTATQQLLKSGGLQICSTINRNPKSYAMAIFGAEVVMRWLPRGTHEWSKFITPDELFALLEQAGLNPVDRKGFVFNPILWKWSISDRDLSVNYVTASTKS.

S-adenosyl-L-methionine-binding residues include arginine 40, glycine 71, aspartate 92, and methionine 135.

It belongs to the methyltransferase superfamily. UbiG/COQ3 family.

It carries out the reaction a 3-demethylubiquinol + S-adenosyl-L-methionine = a ubiquinol + S-adenosyl-L-homocysteine + H(+). The catalysed reaction is a 3-(all-trans-polyprenyl)benzene-1,2-diol + S-adenosyl-L-methionine = a 2-methoxy-6-(all-trans-polyprenyl)phenol + S-adenosyl-L-homocysteine + H(+). The protein operates within cofactor biosynthesis; ubiquinone biosynthesis. O-methyltransferase that catalyzes the 2 O-methylation steps in the ubiquinone biosynthetic pathway. The sequence is that of Ubiquinone biosynthesis O-methyltransferase from Ruegeria sp. (strain TM1040) (Silicibacter sp.).